Here is a 195-residue protein sequence, read N- to C-terminus: Dual-action ribosomal maturation protein DarP (195 aa).

The protein belongs to the DarP family.

The protein localises to the cytoplasm. Member of a network of 50S ribosomal subunit biogenesis factors which assembles along the 30S-50S interface, preventing incorrect 23S rRNA structures from forming. Promotes peptidyl transferase center (PTC) maturation. The protein is Dual-action ribosomal maturation protein DarP of Stenotrophomonas maltophilia (strain K279a).